A 260-amino-acid chain; its full sequence is Factor V activator RVV-V gamma (260 aa).

A signal peptide spans Met1–Ala18. Residues Gln19–Leu24 constitute a propeptide that is removed on maturation. Positions Val25–Ala251 constitute a Peptidase S1 domain. Cystine bridges form between Cys31–Cys165, Cys52–Cys68, Cys100–Cys258, Cys144–Cys212, Cys176–Cys191, and Cys202–Cys227. Catalysis depends on charge relay system residues His67 and Asp112. The active-site Charge relay system is Ser206. N-linked (GlcNAc...) asparagine glycosylation occurs at Asn253.

The protein belongs to the peptidase S1 family. Snake venom subfamily. Monomer. Expressed by the venom gland.

The protein localises to the secreted. It carries out the reaction Fully activates human clotting factor V by a single cleavage at the 1545-Trp-Tyr-Leu-Arg-|-Ser-Asn-Asn-Gly-1552 bond. Cattle, but not rabbit, factor V is cleaved, and no other proteins of the clotting system are attacked. Esterase activity is observed on Bz-Arg-OEt and Tos-Arg-OMe, and amidase activity on Phe-pipecolyl-Arg-NHPhNO2.. Its function is as follows. Venom serine protease that selectively activates factor V (F5) in a calcium-independent manner. It cleaves the Arg(1545)-Ser(1546) linkage in the human factor V molecule. Induces the coagulation of mammalian plasma. In Daboia siamensis (Eastern Russel's viper), this protein is Factor V activator RVV-V gamma.